The primary structure comprises 353 residues: F-box protein At3g58530 (353 aa).

Positions 8–56 (EEEEETWRREIVTSVMRLVSTRLPQTDLISLLLVSPWLYRTLISYPSIW) constitute an F-box; degenerate domain.

This Arabidopsis thaliana (Mouse-ear cress) protein is F-box protein At3g58530.